A 600-amino-acid chain; its full sequence is Zinc metalloproteinase-disintegrin-like stejnihagin-B (600 aa).

The N-terminal stretch at Met-1 to Ser-20 is a signal peptide. Residues Ile-21–Glu-191 constitute a propeptide that is removed on maturation. Pyrrolidone carboxylic acid is present on Gln-192. Residues Arg-198–Leu-389 enclose the Peptidase M12B domain. N-linked (GlcNAc...) asparagine glycans are attached at residues Asn-261 and Asn-317. Intrachain disulfides connect Cys-306–Cys-384, Cys-346–Cys-368, and Cys-348–Cys-351. His-331 serves as a coordination point for Zn(2+). Glu-332 is a catalytic residue. Residues His-335 and His-341 each coordinate Zn(2+). Residues Pro-397–Asn-483 enclose the Disintegrin domain. Residues Val-399, Asn-402, Leu-404, Glu-406, Glu-409, and Asp-412 each contribute to the Ca(2+) site. 14 cysteine pairs are disulfide-bonded: Cys-400/Cys-429, Cys-411/Cys-424, Cys-413/Cys-419, Cys-423/Cys-446, Cys-437/Cys-443, Cys-442/Cys-468, Cys-455/Cys-475, Cys-462/Cys-494, Cys-487/Cys-499, Cys-506/Cys-556, Cys-521/Cys-565, Cys-534/Cys-544, Cys-551/Cys-587, and Cys-581/Cys-593. A glycan (N-linked (GlcNAc...) asparagine) is linked at Asn-425. Positions Glu-461–Asp-463 match the D/ECD-tripeptide motif. Asn-467 carries an N-linked (GlcNAc...) asparagine glycan. A glycan (N-linked (GlcNAc...) asparagine) is linked at Asn-513.

The protein belongs to the venom metalloproteinase (M12B) family. P-III subfamily. P-IIIa sub-subfamily. Monomer. The cofactor is Zn(2+). As to expression, expressed by the venom gland.

The protein resides in the secreted. This metalloproteinase-disintegrin-like impairs hemostasis in the envenomed animal. The sequence is that of Zinc metalloproteinase-disintegrin-like stejnihagin-B from Trimeresurus stejnegeri (Chinese green tree viper).